The primary structure comprises 548 residues: Cytochrome P450 monooxygenase hepE (548 aa).

Cysteine 485 is a heme binding site.

It belongs to the cytochrome P450 family. Heme serves as cofactor.

The protein operates within secondary metabolite biosynthesis. Functionally, cytochrome P450 monooxygenase; part of the gene cluster that mediates the biosynthesis of heptelidic acid (HA), a sesquiterpene lactone that acts as an inhibitor of glyceraldehyde-3-phosphatedehydrogenase (GAPDH) and a growth inhibitor of the salt-tolerant lactic acid bacteria in soy sauce brewing. This chain is Cytochrome P450 monooxygenase hepE, found in Aspergillus oryzae (strain ATCC 42149 / RIB 40) (Yellow koji mold).